The chain runs to 338 residues: Glycerol-1-phosphate dehydrogenase [NAD(P)+] (338 aa).

NAD(+) is bound by residues 81–85 (GRPLD) and 103–106 (TSAS). D108 is a binding site for substrate. S112 provides a ligand contact to NAD(+). D157 lines the substrate pocket. The Zn(2+) site is built by D157 and H238. Position 242 (H242) interacts with substrate. Zn(2+) is bound at residue H256.

It belongs to the glycerol-1-phosphate dehydrogenase family. Homodimer. The cofactor is Zn(2+).

The protein localises to the cytoplasm. It catalyses the reaction sn-glycerol 1-phosphate + NAD(+) = dihydroxyacetone phosphate + NADH + H(+). The enzyme catalyses sn-glycerol 1-phosphate + NADP(+) = dihydroxyacetone phosphate + NADPH + H(+). It functions in the pathway membrane lipid metabolism; glycerophospholipid metabolism. In terms of biological role, catalyzes the NAD(P)H-dependent reduction of dihydroxyacetonephosphate (DHAP or glycerone phosphate) to glycerol 1-phosphate (G1P). The G1P thus generated is used as the glycerophosphate backbone of phospholipids in the cellular membranes of Archaea. This Pyrobaculum calidifontis (strain DSM 21063 / JCM 11548 / VA1) protein is Glycerol-1-phosphate dehydrogenase [NAD(P)+].